The primary structure comprises 102 residues: RNA-binding protein Hfq (102 aa).

Residues 9-68 form the Sm domain; it reads DPFLNALRRERVPVSIYLVNGIKLQGQIESFDQFVILLKNTVSQMVYKHAISTVVPSRPV. Residues 65 to 102 are disordered; the sequence is SRPVSHHSSNTSVGASVGNYHSGGVSAPAAQQESDGTE. Residues 93–102 are compositionally biased toward polar residues; sequence AAQQESDGTE.

Belongs to the Hfq family. Homohexamer.

Its function is as follows. RNA chaperone that binds small regulatory RNA (sRNAs) and mRNAs to facilitate mRNA translational regulation in response to envelope stress, environmental stress and changes in metabolite concentrations. Also binds with high specificity to tRNAs. In Photorhabdus laumondii subsp. laumondii (strain DSM 15139 / CIP 105565 / TT01) (Photorhabdus luminescens subsp. laumondii), this protein is RNA-binding protein Hfq.